The following is an 829-amino-acid chain: Periplasmic nitrate reductase (829 aa).

A signal peptide (tat-type signal) is located at residues 1–36 (MARRDFIKQTAAAAAATVAGVPLTGYTQNIVTESEA). One can recognise a 4Fe-4S Mo/W bis-MGD-type domain in the interval 39 to 95 (LKWSKAPCRFCGTGCGVNVAVKDNQVVATHGDFNAEVNKGLNCVKGYFLSKIMYGSD). Cysteine 46, cysteine 49, cysteine 53, and cysteine 81 together coordinate [4Fe-4S] cluster. Residues lysine 83, glutamine 150, asparagine 175, cysteine 179, 212–219 (WGSNMAEM), 243–247 (STFEH), 262–264 (QSD), methionine 373, glutamine 377, asparagine 483, 509–510 (SD), lysine 532, aspartate 559, and 719–728 (TGRVLEHWHS) each bind Mo-bis(molybdopterin guanine dinucleotide). Substrate is bound at residue tryptophan 795. Mo-bis(molybdopterin guanine dinucleotide)-binding residues include asparagine 803 and lysine 820.

This sequence belongs to the prokaryotic molybdopterin-containing oxidoreductase family. NasA/NapA/NarB subfamily. Component of the periplasmic nitrate reductase NapAB complex composed of NapA and NapB. [4Fe-4S] cluster is required as a cofactor. The cofactor is Mo-bis(molybdopterin guanine dinucleotide). Predicted to be exported by the Tat system. The position of the signal peptide cleavage has not been experimentally proven.

It localises to the periplasm. It catalyses the reaction 2 Fe(II)-[cytochrome] + nitrate + 2 H(+) = 2 Fe(III)-[cytochrome] + nitrite + H2O. Its function is as follows. Catalytic subunit of the periplasmic nitrate reductase complex NapAB. Receives electrons from NapB and catalyzes the reduction of nitrate to nitrite. The polypeptide is Periplasmic nitrate reductase (Bordetella bronchiseptica (strain ATCC BAA-588 / NCTC 13252 / RB50) (Alcaligenes bronchisepticus)).